Here is a 373-residue protein sequence, read N- to C-terminus: Mannitol-1-phosphate 5-dehydrogenase (373 aa).

3-14 (ALHFGAGNIGRG) contacts NAD(+).

This sequence belongs to the mannitol dehydrogenase family.

It catalyses the reaction D-mannitol 1-phosphate + NAD(+) = beta-D-fructose 6-phosphate + NADH + H(+). The polypeptide is Mannitol-1-phosphate 5-dehydrogenase (mtlD) (Bacillus subtilis (strain 168)).